A 371-amino-acid polypeptide reads, in one-letter code: S-adenosylmethionine:tRNA ribosyltransferase-isomerase (371 aa).

It belongs to the QueA family. In terms of assembly, monomer.

It is found in the cytoplasm. It carries out the reaction 7-aminomethyl-7-carbaguanosine(34) in tRNA + S-adenosyl-L-methionine = epoxyqueuosine(34) in tRNA + adenine + L-methionine + 2 H(+). The protein operates within tRNA modification; tRNA-queuosine biosynthesis. Transfers and isomerizes the ribose moiety from AdoMet to the 7-aminomethyl group of 7-deazaguanine (preQ1-tRNA) to give epoxyqueuosine (oQ-tRNA). This Nitratidesulfovibrio vulgaris (strain ATCC 29579 / DSM 644 / CCUG 34227 / NCIMB 8303 / VKM B-1760 / Hildenborough) (Desulfovibrio vulgaris) protein is S-adenosylmethionine:tRNA ribosyltransferase-isomerase.